Here is a 250-residue protein sequence, read N- to C-terminus: Deoxynucleoside-5'-monophosphate kinase (250 aa).

Residues Gly-14, Asp-16, and Thr-17 each contribute to the ATP site. Positions 44, 65, 130, 137, 138, 150, 170, 172, 176, and 210 each coordinate dGMP.

The protein belongs to the dNMP kinase family. In terms of assembly, monomer.

The enzyme catalyses a 2'-deoxyribonucleoside 5'-phosphate + ATP = a 2'-deoxyribonucleoside 5'-diphosphate + ADP. Functionally, allows the synthesis of deoxyribonucleoside triphosphates necessary for the rapid viral DNA replication. Phosphorylates all four dNMPs. The enzyme had the highest activity with dAMP and had about 30% less activity with dTMP and dGMP, respectively. The lowest activity was observed with dCMP as the substrate (about 35% of that with dAMP). The polypeptide is Deoxynucleoside-5'-monophosphate kinase (Escherichia coli (Enterobacteria phage T5)).